A 190-amino-acid polypeptide reads, in one-letter code: Shikimate kinase (190 aa).

14-19 (GAGKST) lines the ATP pocket. Position 18 (S18) interacts with Mg(2+). Substrate-binding residues include D36, R60, and G82. Residue R120 coordinates ATP. Residue R139 participates in substrate binding.

Belongs to the shikimate kinase family. As to quaternary structure, monomer. It depends on Mg(2+) as a cofactor.

The protein resides in the cytoplasm. The enzyme catalyses shikimate + ATP = 3-phosphoshikimate + ADP + H(+). Its pathway is metabolic intermediate biosynthesis; chorismate biosynthesis; chorismate from D-erythrose 4-phosphate and phosphoenolpyruvate: step 5/7. Functionally, catalyzes the specific phosphorylation of the 3-hydroxyl group of shikimic acid using ATP as a cosubstrate. This Thioalkalivibrio sulfidiphilus (strain HL-EbGR7) protein is Shikimate kinase.